We begin with the raw amino-acid sequence, 399 residues long: Putative endoplasmin-like protein (399 aa).

A Glycyl lysine isopeptide (Lys-Gly) (interchain with G-Cter in SUMO2) cross-link involves residue K130. Residues 350 to 399 form a disordered region; it reads LDLAVVEEPDEEPEETAEDKEQDKDKEMDVGTDEEKQETAKESTAEKDEL. A compositionally biased stretch (acidic residues) spans 354-367; the sequence is VVEEPDEEPEETAE. Over residues 368–399 the composition is skewed to basic and acidic residues; sequence DKEQDKDKEMDVGTDEEKQETAKESTAEKDEL.

This sequence belongs to the heat shock protein 90 family.

Its function is as follows. Putative molecular chaperone. In Homo sapiens (Human), this protein is Putative endoplasmin-like protein (HSP90B2P).